Here is a 59-residue protein sequence, read N- to C-terminus: Large ribosomal subunit protein uL30 (59 aa).

The protein belongs to the universal ribosomal protein uL30 family. In terms of assembly, part of the 50S ribosomal subunit.

This is Large ribosomal subunit protein uL30 from Hydrogenobaculum sp. (strain Y04AAS1).